A 206-amino-acid chain; its full sequence is Potassium-transporting ATPase KdpC subunit (206 aa).

The helical transmembrane segment at 14 to 34 (VLAVFTLFGLGLAYSLIATGI) threads the bilayer.

This sequence belongs to the KdpC family. In terms of assembly, the system is composed of three essential subunits: KdpA, KdpB and KdpC.

The protein localises to the cell inner membrane. Part of the high-affinity ATP-driven potassium transport (or Kdp) system, which catalyzes the hydrolysis of ATP coupled with the electrogenic transport of potassium into the cytoplasm. This subunit acts as a catalytic chaperone that increases the ATP-binding affinity of the ATP-hydrolyzing subunit KdpB by the formation of a transient KdpB/KdpC/ATP ternary complex. In Xanthomonas axonopodis pv. citri (strain 306), this protein is Potassium-transporting ATPase KdpC subunit.